The chain runs to 515 residues: 1-pyrroline-5-carboxylate dehydrogenase (515 aa).

Catalysis depends on residues Glu286 and Cys320.

It belongs to the aldehyde dehydrogenase family. RocA subfamily.

It carries out the reaction L-glutamate 5-semialdehyde + NAD(+) + H2O = L-glutamate + NADH + 2 H(+). It functions in the pathway amino-acid degradation; L-proline degradation into L-glutamate; L-glutamate from L-proline: step 2/2. In Geobacillus kaustophilus (strain HTA426), this protein is 1-pyrroline-5-carboxylate dehydrogenase.